We begin with the raw amino-acid sequence, 456 residues long: NADH-quinone oxidoreductase subunit N (456 aa).

A run of 14 helical transmembrane segments spans residues 6–26 (LFALSPLAALAIGAVIAMLLA), 45–65 (VAALLEILRAGVPPAPIGALF), 75–95 (TAYAALFGLAALVFLRVAGVA), 97–117 (EAPALVALVALGAASLTGAGH), 118–138 (AATLFLGLELISLSLIALFAF), 151–171 (FLVMSGLATSAQLLGVALIYA), 181–201 (WVGHGPLFALGTALLLAGLAF), 220–240 (PAGAAALAGVVSKAAVAIAIL), 252–272 (LWSAGLATLGAASVLVGNVLA), 281–301 (MLGYSTIAHSGYIAMILASGA), 308–328 (VLFYLGIYAPALTATLCASAM), 355–375 (GLLSLAGLPVAGGFVAKLYLF), 382–402 (ESWILLAIAMVGAALGFYYYI), and 426–446 (LLLIFCFGLIMLFGFEPLVLI).

Belongs to the complex I subunit 2 family. As to quaternary structure, NDH-1 is composed of 14 different subunits. Subunits NuoA, H, J, K, L, M, N constitute the membrane sector of the complex.

The protein resides in the cell inner membrane. It carries out the reaction a quinone + NADH + 5 H(+)(in) = a quinol + NAD(+) + 4 H(+)(out). Its function is as follows. NDH-1 shuttles electrons from NADH, via FMN and iron-sulfur (Fe-S) centers, to quinones in the respiratory chain. The immediate electron acceptor for the enzyme in this species is believed to be ubiquinone. Couples the redox reaction to proton translocation (for every two electrons transferred, four hydrogen ions are translocated across the cytoplasmic membrane), and thus conserves the redox energy in a proton gradient. This chain is NADH-quinone oxidoreductase subunit N, found in Rhodopseudomonas palustris (strain BisA53).